The chain runs to 52 residues: Large ribosomal subunit protein bL33 (52 aa).

It belongs to the bacterial ribosomal protein bL33 family.

The protein is Large ribosomal subunit protein bL33 (rpmG) of Chlamydia muridarum (strain MoPn / Nigg).